The sequence spans 396 residues: Putative cystathionine beta-lyase (396 aa).

Lys-210 carries the post-translational modification N6-(pyridoxal phosphate)lysine.

Belongs to the trans-sulfuration enzymes family. Pyridoxal 5'-phosphate serves as cofactor.

The catalysed reaction is L,L-cystathionine + H2O = L-homocysteine + pyruvate + NH4(+). The enzyme catalyses an S-substituted L-cysteine + H2O = a thiol + pyruvate + NH4(+). The protein operates within amino-acid biosynthesis; L-methionine biosynthesis via de novo pathway; L-homocysteine from L-cystathionine: step 1/1. In terms of biological role, catalyzes the cleavage of cystathionine to homocysteine, pyruvate and ammonia during methionine biosynthesis. In Rhizobium johnstonii (strain DSM 114642 / LMG 32736 / 3841) (Rhizobium leguminosarum bv. viciae), this protein is Putative cystathionine beta-lyase (metC).